The following is a 237-amino-acid chain: Uridylate kinase (237 aa).

Position 12–15 (12–15) interacts with ATP; sequence KLSG. The interval 20–25 is involved in allosteric activation by GTP; sequence GDEGFG. G54 is a binding site for UMP. Residues G55 and R59 each contribute to the ATP site. UMP-binding positions include D74 and 135 to 142; that span reads TGSPFFTT. The ATP site is built by T162, Y168, and D171.

Belongs to the UMP kinase family. As to quaternary structure, homohexamer.

Its subcellular location is the cytoplasm. It carries out the reaction UMP + ATP = UDP + ADP. It functions in the pathway pyrimidine metabolism; CTP biosynthesis via de novo pathway; UDP from UMP (UMPK route): step 1/1. With respect to regulation, allosterically activated by GTP. Inhibited by UTP. In terms of biological role, catalyzes the reversible phosphorylation of UMP to UDP. The protein is Uridylate kinase of Actinobacillus pleuropneumoniae serotype 5b (strain L20).